A 211-amino-acid polypeptide reads, in one-letter code: Suppressor of RNA silencing p3 (211 aa).

It belongs to the tenuiviruses p3 protein family. As to quaternary structure, homodimer.

The protein localises to the host cytoplasm. Its function is as follows. Acts as a suppressor of RNA-mediated gene silencing, also known as post-transcriptional gene silencing (PTGS), presumably through the binding of dsRNA. The protein is Suppressor of RNA silencing p3 of Avena sativa (Oat).